The sequence spans 546 residues: Chaperonin GroEL (546 aa).

ATP contacts are provided by residues 29-32 (TMGP), Lys50, 86-90 (DGTTT), Gly414, and Asp492.

Belongs to the chaperonin (HSP60) family. Forms a cylinder of 14 subunits composed of two heptameric rings stacked back-to-back. Interacts with the co-chaperonin GroES.

It is found in the cytoplasm. It carries out the reaction ATP + H2O + a folded polypeptide = ADP + phosphate + an unfolded polypeptide.. Together with its co-chaperonin GroES, plays an essential role in assisting protein folding. The GroEL-GroES system forms a nano-cage that allows encapsulation of the non-native substrate proteins and provides a physical environment optimized to promote and accelerate protein folding. In Helicobacter pylori (strain Shi470), this protein is Chaperonin GroEL.